Here is a 207-residue protein sequence, read N- to C-terminus: Large ribosomal subunit protein uL4 (207 aa).

The segment covering 44–58 has biased composition (basic and acidic residues); the sequence is RAPTRATRERSDVAR. A disordered region spans residues 44 to 82; that stretch reads RAPTRATRERSDVARSGKKFGRQKGGGTARHGDRRSPIF.

Belongs to the universal ribosomal protein uL4 family. In terms of assembly, part of the 50S ribosomal subunit.

In terms of biological role, one of the primary rRNA binding proteins, this protein initially binds near the 5'-end of the 23S rRNA. It is important during the early stages of 50S assembly. It makes multiple contacts with different domains of the 23S rRNA in the assembled 50S subunit and ribosome. Its function is as follows. Forms part of the polypeptide exit tunnel. This chain is Large ribosomal subunit protein uL4, found in Zymomonas mobilis subsp. mobilis (strain ATCC 31821 / ZM4 / CP4).